Here is a 340-residue protein sequence, read N- to C-terminus: Nitrilase (340 aa).

Residues Ile7–Met273 form the CN hydrolase domain. Glu47 functions as the Proton acceptor in the catalytic mechanism. Lys129 is an active-site residue. Cys163 (nucleophile) is an active-site residue.

This sequence belongs to the carbon-nitrogen hydrolase superfamily. Nitrilase family. Forms oligomers.

It carries out the reaction a nitrile + 2 H2O = a carboxylate + NH4(+). The catalysed reaction is phenylpropanonitrile + 2 H2O = 3-phenylpropanoate + NH4(+). It catalyses the reaction an aliphatic nitrile + 2 H2O = a carboxylate + NH4(+). Highly resistant to various miscible cosolvents and tolerates high substrate concentrations. In terms of biological role, catalyzes the hydrolysis of a broad range of nitriles to yield their corresponding carboxylic acid and ammonia. In vitro, shows high activity toward benzylic/unsaturated nitriles. The preferred substrate is trans-cinnamonitrile, followed by mono/di-cyanopyridines and aromatic substituted nitriles, with a moderate activity toward 3-phenylpropionitrile. Shows weaker activity toward the common dinitrile fumaronitrile. Also shows weak activity toward some aliphatic nitriles, including adiponitrile and glutaronitrile, and the arylacetonitrile 2-thiopheneacetonitrile. The protein is Nitrilase of Paraburkholderia phymatum (strain DSM 17167 / CIP 108236 / LMG 21445 / STM815) (Burkholderia phymatum).